The sequence spans 332 residues: Glycerol-3-phosphate dehydrogenase [NAD(P)+] (332 aa).

W11, R30, and K108 together coordinate NADPH. Residues K108, G137, and S139 each contribute to the sn-glycerol 3-phosphate site. Residue A141 participates in NADPH binding. Sn-glycerol 3-phosphate is bound by residues K192, D245, S255, R256, and N257. The active-site Proton acceptor is the K192. R256 serves as a coordination point for NADPH. NADPH contacts are provided by V280 and E282.

Belongs to the NAD-dependent glycerol-3-phosphate dehydrogenase family.

Its subcellular location is the cytoplasm. The catalysed reaction is sn-glycerol 3-phosphate + NAD(+) = dihydroxyacetone phosphate + NADH + H(+). The enzyme catalyses sn-glycerol 3-phosphate + NADP(+) = dihydroxyacetone phosphate + NADPH + H(+). It participates in membrane lipid metabolism; glycerophospholipid metabolism. Its function is as follows. Catalyzes the reduction of the glycolytic intermediate dihydroxyacetone phosphate (DHAP) to sn-glycerol 3-phosphate (G3P), the key precursor for phospholipid synthesis. The sequence is that of Glycerol-3-phosphate dehydrogenase [NAD(P)+] from Burkholderia lata (strain ATCC 17760 / DSM 23089 / LMG 22485 / NCIMB 9086 / R18194 / 383).